The following is a 244-amino-acid chain: Multiple organellar RNA editing factor 3, mitochondrial (244 aa).

The N-terminal 62 residues, 1–62, are a transit peptide targeting the mitochondrion; the sequence is MALISTRRTL…GPCYISTRPK (62 aa). Disordered stretches follow at residues 59–82 and 196–244; these read TRPK…SNRP and YRFT…KPSA. The segment covering 60–80 has biased composition (polar residues); the sequence is RPKTSGSGYSPLNDPSPNWSN. Over residues 210 to 226 the composition is skewed to basic and acidic residues; that stretch reads PRYDRRRETMQVERREP.

This sequence belongs to the MORF family. Heterodimer with MORF1. Homodimer and heterodimers with MORF8/RIP1, MORF4/RIP4 and MORF5/RIP5.

It is found in the mitochondrion. In terms of biological role, involved in organellar RNA editing. Required for the processing of RNA editing sites in mitochondria. The protein is Multiple organellar RNA editing factor 3, mitochondrial of Arabidopsis thaliana (Mouse-ear cress).